The following is a 3763-amino-acid chain: MKGSIFLLFIFQIFKFSSSYSHYPHKNQFSFYSPTSLSFTSSNFSSGSGSGSGGASGSGGGGNIGNKYNNENNKINEEIIISCIYDDYLNFQYQDLSKINGILINGFNKNSTSDIFVKNVNSQYYDQSDSSNNFHYFDQENNNLSPQSQLNKECPFNLKNPIPTFSNSRYSIKIDKSFDVSDEITLVSKNNFLNSNSISKLKFKVYIPNKITNKIKIQLINSLTGNNGPKIPLLNTIENNYLKPFPCHQWLDAFILFNETNYYNNNNNNNYPIFYNGLKITSSNRSLDNTWIDEVYIDEIKLISNNNKHNSNKNDRKRNIDQTNEIYDKININNNNYNIRKLFSILDDNNNNNNNNNNNNNNNNNNEIINSYNTINSRADIALGGNSDDQSDISYSIICNKHMNELNNEIKWRFEEGSSSSLVETANGNLILEGSIHSISKHQADYNFNCKTNWKIRIEFSPIIDDYQYNGRMELASFAYTKNGGPIDTLYWKYYKFVNGYLSGLDCNQGKLIQINNNNNHNENNNGILQIGIGANNKNGRFGLSVYGLQLSIDNDNTFNINVDLNNQNNHLSNNNNKNNNNNNNNEVLECNCPIGFICLNDGTCKLNFQNDVDEEYIDCSTLQCPSGYECKLDKNSKTRGCIEQIGPQNLNQTNKCLGNLKCPDGFGCWHNSTDNTLNCKQYNNHKFDTNVIDSEKHRHHCRNVDCPKSHYCKIQRNGLPRCFPKVNPCEFVSCDCNLECRVTSCGDAKCFAPEECCEGKACMDTRNYRCVKINGVDECVRIPPLKPLPPPPIFYETPSPTSAPPTETPSPTDTPTDKPTIPPTPTPTPSKEITDCSQVICQVNYTCFDIQKGVGPFTPVCIPINYCDEYTTRFDLQGYVWLDDNENGYRDVNENGVETEPIGVEGIFCNLVFSTDHSPARNHYGDIIPVSVTNLDGFFSFNDVVPGSYVIDFYNIKGYHWTLPFNRYFKNSNWVNSDGTSLPFELPQYNVSNPNFIISPQSNLISKSITLPQPIFSTNAIVTVNNDGFDELGSSGSGSSGNSGSSGSGGSSNDSTESQWSSESESSASLITPSNICQTHFTVSNILAGLIVGPQPTPSTDIPTTTTTTTSTSTTGPIEPTSTPTPIVDVIDYYGIGKQVFIDFNNNGIFDSGIDRPVSGVEITLIQKGFRAYNHKGDKVPTIKTDTNGFYFFDALAPGVYRVSLNNLPPHGYTNSLLNKYPIDTSSNTSAQFIVYYRVKDNIKYNASDYPLASSNIKPKLAQYINSYVDFALVPINPPIAVGDTVYFDSNQNGKQDPFEKGIKGIQVTLKDLKNGYEYKTITDDNGKYLFDQMIESDNYQLQFSVPNGFQVVDHPNSIKNGVYTMDTFQLSSSTTPPTNASLTKGVVGNKKVNSAYFDDSKDVPLYFENSYAIGHQAFIDTNLDGLYKNDLDKPLPGVEVTLVNAASPSTPITNILGQIVRTVITDAKGFYQFDFLKPNNYIVQFKPPTGFKVTKPPPNTATYPELGSLIDTKSFKTPSLDIVTLSKPKNIEYIRLNVQASNIFESVNAGFYIPPTFSIGHRVWYDTNADGIMDPTEEGVPGIVVSLYTDKSEPAYDINDNLIIPTITDSKGFYLLTKIPTGNYFISFSNLPKGYTWTKQNVLTLDSVGYDSRPNVFTGYTSLFEMSTTSQLVRTTVPSDNSPDFYINPIENAGIIKGNRGLVIKYAVGRYIFYDDNRNGILDDYENGVGGVIVQIFTSAGKPALDFNGKVIPPAVTDSTGRYIIDNLSQGDYIIQFSNIPNGYNFENLPPPYPNYLNGRIGTFTLSPSSSINTTNVIKKFNPPKPNGGKKVSFSHSINQKSRKLLNDGIIGQDTSVDLSNVIAGGSTVDGVDIPNVIAGGSTVDGGTSVNGGTGSTSTTTVSSSPSSSSDIGSSSDISSEVSSSLSSSPSSSEQPSEQSSSSSEQPPEDSMEEYPVHYYEPVFETTPGSYPLDSIKAERTDLTRNAAIVRAAPYAFGQKVFFIDNNGNEVGVPDVTVTLVNSNGFPVTSINGVNMVPTKTDSKGSYRFNLLRAGSYHVEFSNIPIGFSFFDPLSGKIDFNLVNTDPNVRGAIPADKVPKATYYDQHVNLQLNPPFIFAIGTRVWNDTNKNGLYEIAEPVFPNITVRLFDQNLQPVLDNFNIQVEPTVTNALGQYYFDNLHSGSYIVKFEVPTRYYFAPQLKSIENSNGVGVNSKPNSQGYTSVISLSPDSLVEAPPSDFNFTIRSLVGNFHIDAGLIYDENYVKSYAVGRYVFYDLNDNGIMDSGEMGVPNVTVEIFNPTGQQVYNINELLIGSTTTDSNGYYLFDEIQPGSYIIKFSNIPNDLMFGNKTKPNSNTGLTEPFLLFPKEPAIRLVNSTTDVGVKAQAVDFTENAGLIKKVTFAIGHYVWYDINSNGLQDYPNEPPAYGVPLRLLKCNLIGITYDTCFTVINTTTTDQNGLYYFDNLSPGLYKLLFMNQQGIFETTTPFAGNGTNDSKAIDEAITGIRLSIYTKNVTKTDSNLDPMIKAPFIDRTLNVGILKPPMFSIGHKVWYDTNKNGKIDLKEQPAPNVTIYLKRAKEVNFEYSFDLYGKPMIAKTNETGDYWINNIPPGLYIAKFFPPNDTRFTIQMNDNSANVFGSSYAIYLFYKVPGIHPYNLKVDIGAVNASYVYSKVNAGLLKGLVDIRLYAVSGYVYNDTNSNGIRDPGENGVNGTIVTLLDINGNTMVDADSYPINSYTTGPDGYYKFDDFSFGKYIITFSGVPDLIYQFYKPDDQQHLNHSTLSNITIWSPDNPMVVNATLSDHVNAQYILREQNKGIIRVITYAIGGKVIPDFKNTTYKDSGYAGGAVIVQLYRNNSIATDLRGNPIPSVLTNVLTGEYLFDNVPILEGYQVMFSSPPPGWIFEKYRITQTPFIQLDLLPSFNLPKSNPKLIDKKLYPNIFATYGVLDQDTIISPTLFGIGKNTFIDVENSGLESIPLIPLGGVVVTLYNSVFERVFDAFGNLVKEKTTGEDGEYSFEDLYSGQYIVHFGLVEGYSFTQQYAGTDPEIDSNASPVDGYSEIIQLDSMNNELILIPLESRNNTLFCDPTIDGGYVSLSPQGFISGMTYIDYNADGVFTPNSRDKPYPNITVSIYTGDDSRLVATAQTDKKGFYSFSHLFISTQYQVVFSGIPQGYYTSFQADTVQFPIATKTGVNLGIIKPLEYCQDDIKIITTCFVRGDSNDDLPAVVQFPYTAYSDLNGDNGQKVDLVTMSETKTVYGLGYDRKENTIYLSPYKKQFSSLNSKTSSTIFKKSLSTGALSAYVNLATVLGFDFLAPNGKVYGDSQTYRVLFGDLDIIGDYIWVTNLYRNIVVKIPLRQTPTRENIKLVNITHNCGPDPFRIFGLGYNGSNVFVGGVCEGSVSKDIRNVIGVIKVISSDETSFSDVLTIPMNYPRGRLQTRIMFLNDMTPIFSSVQNSTWQVWNDTVGSFKPQPQITDITFIGDGGNMVISMKDREADSQSVTPAGDILMACKDSNGVYQLESAGVCGGLIGTNPISIGTMIEQGPGGGEFFDDNFSDRDWQHDETTWGSSYYLPGSGEVIGGAYDLLSTNEAIVKHWSVYNGRVLYGFILIHGAGLDYVFNKVNGLGDMDANCRLPNTYIGNYVWYDLNKNGLQDPNEKGMANITVQLFSAANSTFINSTLTDSSGNYNFQVISEFKYRVHFVAPKGFTYSPIVTVSSDPNDKRDLEKINSLPDSKGDAYFFANGNGENTQDIDCGFIRI.

Residues 1–19 (MKGSIFLLFIFQIFKFSSS) form the signal peptide. 4 N-linked (GlcNAc...) asparagine glycosylation sites follow: Asn-43, Asn-110, Asn-258, and Asn-284. In terms of domain architecture, Follistatin-like 1 spans 619–643 (DCSTLQCPSGYECKLDKNSKTRGCI). N-linked (GlcNAc...) asparagine glycans are attached at residues Asn-652 and Asn-672. Follistatin-like domains are found at residues 701–724 (HCRN…PRCF) and 729–752 (PCEF…AKCF). Residues 792-832 (PPIFYETPSPTSAPPTETPSPTDTPTDKPTIPPTPTPTPSK) are disordered. Over residues 810–820 (PSPTDTPTDKP) the composition is skewed to low complexity. 2 N-linked (GlcNAc...) asparagine glycosylation sites follow: Asn-845 and Asn-991. Disordered stretches follow at residues 1033-1068 (LGSS…SESS) and 1095-1124 (PQPT…PTST). Over residues 1036-1051 (SGSGSSGNSGSSGSGG) the composition is skewed to gly residues. Composition is skewed to low complexity over residues 1052-1068 (SSND…SESS) and 1099-1124 (PSTD…PTST). Asn-1054 carries N-linked (GlcNAc...) asparagine glycosylation. Residues 1159–1227 (VSGVEITLIQ…LLNKYPIDTS (69 aa)) form the CNA-B 1 domain. Asn-1229 and Asn-1247 each carry an N-linked (GlcNAc...) asparagine glycan. Residues 1304-1373 (IKGIQVTLKD…VYTMDTFQLS (70 aa)) enclose the CNA-B 2 domain. A glycan (N-linked (GlcNAc...) asparagine) is linked at Asn-1381. CNA-B domains lie at 1437–1515 (LPGV…IDTK), 1582–1648 (VPGI…LTLD), and 1731–1809 (VGGV…FTLS). N-linked (GlcNAc...) asparagine glycosylation is found at Asn-1769 and Asn-1815. Positions 1883 to 1955 (GSTVDGGTSV…SEQPPEDSME (73 aa)) are disordered. Low complexity predominate over residues 1898 to 1948 (STSTTTVSSSPSSSSDIGSSSDISSEVSSSLSSSPSSSEQPSEQSSSSSEQ). The CNA-B 6 domain occupies 2015–2083 (VPDVTVTLVN…DPLSGKIDFN (69 aa)). N-linked (GlcNAc...) asparagine glycosylation is found at Asn-2128, Asn-2145, Asn-2243, Asn-2294, Asn-2351, Asn-2378, Asn-2453, Asn-2493, Asn-2496, Asn-2516, Asn-2572, Asn-2601, Asn-2624, Asn-2668, Asn-2698, Asn-2714, Asn-2781, Asn-2787, Asn-2800, Asn-2838, and Asn-2858. Positions 2143–2197 (FPNITVRLFDQNLQPVLDNFNIQVEPTVTNALGQYYFDNLHSGSYIVKFEVPTRY) constitute a CNA-B 7 domain. The 54-residue stretch at 2292–2345 (VPNVTVEIFNPTGQQVYNINELLIGSTTTDSNGYYLFDEIQPGSYIIKFSNIPN) folds into the CNA-B 8 domain. The CNA-B 9 domain occupies 2453 to 2477 (NTTTTDQNGLYYFDNLSPGLYKLLF). The region spanning 2713 to 2766 (VNGTIVTLLDINGNTMVDADSYPINSYTTGPDGYYKFDDFSFGKYIITFSGVPD) is the CNA-B 10 domain. Residues 2984–3061 (LGGVVVTLYN…DSNASPVDGY (78 aa)) form the CNA-B 11 domain. N-linked (GlcNAc...) asparagine glycosylation is found at Asn-3083, Asn-3130, Asn-3372, Asn-3390, Asn-3459, Asn-3466, Asn-3557, Asn-3666, Asn-3676, and Asn-3681. In terms of domain architecture, CNA-B 12 spans 3128–3201 (YPNITVSIYT…TKTGVNLGII (74 aa)). The CNA-B 13 domain occupies 3664 to 3733 (MANITVQLFS…NDKRDLEKIN (70 aa)).

This sequence belongs to the serine-aspartate repeat-containing protein (SDr) family.

It localises to the secreted. This is Colossin-B (colB) from Dictyostelium discoideum (Social amoeba).